The following is a 277-amino-acid chain: Diaminopimelate epimerase (277 aa).

Substrate contacts are provided by Asn-15 and Asn-74. Cys-83 functions as the Proton donor in the catalytic mechanism. Substrate contacts are provided by residues 84–85 (GN), Asn-159, Asn-194, and 212–213 (ER). The active-site Proton acceptor is the Cys-221. 222–223 (GT) is a substrate binding site.

It belongs to the diaminopimelate epimerase family. As to quaternary structure, homodimer.

It localises to the cytoplasm. It catalyses the reaction (2S,6S)-2,6-diaminopimelate = meso-2,6-diaminopimelate. Its pathway is amino-acid biosynthesis; L-lysine biosynthesis via DAP pathway; DL-2,6-diaminopimelate from LL-2,6-diaminopimelate: step 1/1. Catalyzes the stereoinversion of LL-2,6-diaminopimelate (L,L-DAP) to meso-diaminopimelate (meso-DAP), a precursor of L-lysine and an essential component of the bacterial peptidoglycan. Involved in the succinylase branch of the diaminopimelate biosynthesis. The sequence is that of Diaminopimelate epimerase from Corynebacterium glutamicum (strain ATCC 13032 / DSM 20300 / JCM 1318 / BCRC 11384 / CCUG 27702 / LMG 3730 / NBRC 12168 / NCIMB 10025 / NRRL B-2784 / 534).